We begin with the raw amino-acid sequence, 403 residues long: Phosphoglycerate kinase (403 aa).

Substrate contacts are provided by residues 22–24, arginine 37, 60–63, arginine 119, and arginine 156; these read DLN and HLGR. ATP is bound by residues lysine 206, glycine 302, glutamate 333, and 359–362; that span reads GGDS.

It belongs to the phosphoglycerate kinase family. As to quaternary structure, monomer.

The protein localises to the cytoplasm. It catalyses the reaction (2R)-3-phosphoglycerate + ATP = (2R)-3-phospho-glyceroyl phosphate + ADP. It functions in the pathway carbohydrate degradation; glycolysis; pyruvate from D-glyceraldehyde 3-phosphate: step 2/5. The chain is Phosphoglycerate kinase from Leifsonia xyli subsp. xyli (strain CTCB07).